The sequence spans 445 residues: Probable glycine dehydrogenase (decarboxylating) subunit 1 (445 aa).

Belongs to the GcvP family. N-terminal subunit subfamily. As to quaternary structure, the glycine cleavage system is composed of four proteins: P, T, L and H. In this organism, the P 'protein' is a heterodimer of two subunits.

It catalyses the reaction N(6)-[(R)-lipoyl]-L-lysyl-[glycine-cleavage complex H protein] + glycine + H(+) = N(6)-[(R)-S(8)-aminomethyldihydrolipoyl]-L-lysyl-[glycine-cleavage complex H protein] + CO2. The glycine cleavage system catalyzes the degradation of glycine. The P protein binds the alpha-amino group of glycine through its pyridoxal phosphate cofactor; CO(2) is released and the remaining methylamine moiety is then transferred to the lipoamide cofactor of the H protein. This chain is Probable glycine dehydrogenase (decarboxylating) subunit 1, found in Citrifermentans bemidjiense (strain ATCC BAA-1014 / DSM 16622 / JCM 12645 / Bem) (Geobacter bemidjiensis).